Here is a 147-residue protein sequence, read N- to C-terminus: Protein LOL1 (147 aa).

The interval 1-38 (MVASRAPRSESPWLKKPMHGVSGSTAMASTPWSSMPPS) is disordered. Positions 22–38 (SGSTAMASTPWSSMPPS) are enriched in polar residues. The interval 47–77 (QLVCSGCRNLLMYPAGATSICCAVCGTVTAV) is putative zinc finger.

The protein resides in the nucleus. Putative zinc finger that may be involved in programmed cell death and defense response. In Oryza sativa subsp. japonica (Rice), this protein is Protein LOL1 (LOL1).